The sequence spans 205 residues: Coenzyme Q-binding protein COQ10, mitochondrial (205 aa).

The protein belongs to the COQ10 family. As to quaternary structure, interacts with coenzyme Q.

Its subcellular location is the mitochondrion inner membrane. Required for the function of coenzyme Q in the respiratory chain. May serve as a chaperone or may be involved in the transport of Q6 from its site of synthesis to the catalytic sites of the respiratory complexes. The sequence is that of Coenzyme Q-binding protein COQ10, mitochondrial (coq10-1) from Dictyostelium discoideum (Social amoeba).